Consider the following 111-residue polypeptide: Putative ciliary rootlet coiled-coil protein-like 1 protein (111 aa).

A coiled-coil region spans residues 21–86 (MELELSVTKL…RQAEQEATVA (66 aa)).

This sequence belongs to the rootletin family.

This is Putative ciliary rootlet coiled-coil protein-like 1 protein (CROCCP2) from Homo sapiens (Human).